The following is a 652-amino-acid chain: Pesticidal crystal protein Cry3Bb (652 aa).

Residues 1 to 12 (MNPNNRSEHDTI) show a composition bias toward basic and acidic residues. Disordered regions lie at residues 1–33 (MNPN…ADNP) and 433–465 (KNET…ETTD). A compositionally biased stretch (polar residues) spans 14 to 33 (VTPNSELQTNHNQYPLADNP).

This sequence belongs to the delta endotoxin family. Monomer.

Its function is as follows. Promotes colloidosmotic lysis by binding to the midgut epithelial cells of Coleoptera. Has moderate level of toxicity to southern corn rootworm. The polypeptide is Pesticidal crystal protein Cry3Bb (cry3Bb) (Bacillus thuringiensis).